Reading from the N-terminus, the 221-residue chain is PKHD-type hydroxylase P9215_13741 (221 aa).

One can recognise a Fe2OG dioxygenase domain in the interval 80 to 174 (RIHGTMFTKT…RFVVVGWIES (95 aa)). Histidine 98, aspartate 100, and histidine 155 together coordinate Fe cation. A 2-oxoglutarate-binding site is contributed by arginine 165.

Fe(2+) serves as cofactor. It depends on L-ascorbate as a cofactor.

This chain is PKHD-type hydroxylase P9215_13741, found in Prochlorococcus marinus (strain MIT 9215).